A 656-amino-acid polypeptide reads, in one-letter code: MAEIIGIDLGTTNSCVAVMEGGKVRVIENAEGSRTTPSIVAYTKDGEVLVGASAKRQAVTNADRTLYAIKRLIGRRFDDNVVQKDIKMVPYKIIKADNGDAWVEVKDKEGKSQKLAPPQISAQVLIKMKKTAEDYLGHEVKDAVITVPAYFNDSQRQATKDAGKIAGLNVKRIINEPTAAALAYGMDKKKGDRKIAVYDLGGGTFDISIIEIAEVDGEHQFEVLATNGDTFLGGEDFDLRLIDYLAGEFKKDEGVDLHNDPLALQRLKEAAEKAKIELSSSQQTDVNLPYITADASGPKHLNIRLTRAKLESLVEDLVERTIEPCKVAIKDAGLKVSEIDDVILVGGQTRMPKVQEAVKNFFGKEARKDVNPDEAVAIGAAIQGAVLSGEVKDVLLLDVTPLSLGIETLGGVMTKLIEKNTTIPTKANQVFSTADDNQTAVTVHVLQGEREMASANKSLGRFDLSDIPPAPRGVPQIEVTFDIDANGILHVSAKDKATGKEQSIVIKASSGLSDEEVEKMVKDAEAHRDSDRKFHELVDARNQADAMIHAAEKSVKDLGSEVSADEKSAIEKVVNELKEAMKGNDKDAIEAKRKALTEHSSKLAERVYAKKGGAAGAPPGGEAEGEPQAQAGGKKEDVVDAEFEEVKDEKKKDEDK.

Thr204 carries the post-translational modification Phosphothreonine; by autocatalysis. The disordered stretch occupies residues 602-656; sequence KLAERVYAKKGGAAGAPPGGEAEGEPQAQAGGKKEDVVDAEFEEVKDEKKKDEDK. Residues 620–632 are compositionally biased toward low complexity; that stretch reads GGEAEGEPQAQAG. Basic and acidic residues predominate over residues 647–656; sequence KDEKKKDEDK.

Belongs to the heat shock protein 70 family.

Its function is as follows. Acts as a chaperone. The polypeptide is Chaperone protein DnaK (Coxiella burnetii (strain CbuG_Q212) (Coxiella burnetii (strain Q212))).